Here is an 860-residue protein sequence, read N- to C-terminus: MQEQYRPEEIESKVQLHWDEKRTFEVTEDESKEKYYCLSMLPYPSGRLHMGHVRNYTIGDVIARYQRMLGKNVLQPIGWDAFGLPAEGAAVKNNTAPAPWTYDNIAYMKNQLKMLGFGYDWSRELATCTPEYYRWEQKFFTELYKKGLVYKKTSAVNWCPNDQTVLANEQVIDGCCWRCDTKVERKEIPQWFIKITAYADELLNDLDKLDHWPDTVKSMQRNWIGRSEGVEITFNVNDYDNTLTVYTTRPDTFMGCTYLAVAAGHPLAQKAAENNPELAAFIDECRNTKVAEAEMATMEKKGVDTGFKAVHPLTGEEIPVWAANFVLMEYGTGAVMAVPGHDQRDYEFASKYGLNIKPVILAADGSEPDLSQQALTEKGVLFNSGEFNGLDHEAAFNAIADKLTAMGVGERKVNYRLRDWGVSRQRYWGAPIPMVTLEDGTVMPTPDDQLPVILPEDVVMDGITSPIKADPEWAKTTVNGMPALRETDTFDTFMESSWYYARYTCPEYKEGMLDSEAANYWLPVDIYIGGIEHAIMHLLYFRFFHKLMRDAGMVNSDEPAKQLLCQGMVLADAFYYVGENGERNWVSPVDAIVERDEKGRIVKAKDAAGHELVYTGMSKMSKSKNNGIDPQVMVERYGADTVRLFMMFASPADMTLEWQESGVEGANRFLKRVWKLVYEHTAKGDVAALNVDGLTEDQKALRRDVHKTIAKVTDDIGRRQTFNTAIAAIMELMNKLAKAPTDGEQDRALMQEALLAVVRMLNPFTPHICFTLWQELKGEGDIDNAPWPVADEKAMVEDSTLVVVQVNGKVRAKITVPVDATEEQVRERAGQEHLVAKYLDGVTVRKVIYVPGKLLNLVVG.

The 'HIGH' region signature appears at 42-52; it reads PYPSGRLHMGH. Positions 619 to 623 match the 'KMSKS' region motif; it reads KMSKS. An ATP-binding site is contributed by Lys-622.

This sequence belongs to the class-I aminoacyl-tRNA synthetase family.

The protein resides in the cytoplasm. The catalysed reaction is tRNA(Leu) + L-leucine + ATP = L-leucyl-tRNA(Leu) + AMP + diphosphate. The chain is Leucine--tRNA ligase from Shigella boydii serotype 18 (strain CDC 3083-94 / BS512).